Consider the following 145-residue polypeptide: Halilectin 3, alpha chain (145 aa).

A glycan (N-linked (GlcNAc...) asparagine) is linked at N73.

As to quaternary structure, probable heterotrimer consisting of an alpha chain and two beta chains. The alpha chain can probably have different glycosylation states. Glycosylated.

Functionally, lectin with affinity for N-acetyl-galactosamine, carragenan and glycoprotein porcine stomach mucin (PSM). Has metal-independent hemagglutinating activity towards erythrocytes from rabbit and human. Hemagglutinating activity is not inhibited by D-galactose, D-glucose, D-mannose, D-fucose, methyl-alpha-D-galactopyranoside, methyl-alpha-D-glucopyranoside, N-acetyl-glucosamine, N-acetyl-mannosamine, D-fructose, alpha-D-lactose, beta-D-lactose, D-lactulose, D-sucrose, fucoidan or glycoproteins thyroglobulin and ovalmucoid. This chain is Halilectin 3, alpha chain, found in Haliclona caerulea (Blue Caribbean sponge).